The following is a 483-amino-acid chain: GTPase Der (483 aa).

EngA-type G domains lie at 3–167 (FTVA…GEER) and 212–387 (LRIA…EIWN). GTP-binding positions include 9-16 (GRPNVGKS), 56-60 (DTAGL), 119-122 (NKAE), 218-225 (GRPNAGKS), 265-269 (DTAGL), and 330-333 (NKWD). Residues 388–472 (RRVSTGRLNR…PIRLSLRTSD (85 aa)) form the KH-like domain.

Belongs to the TRAFAC class TrmE-Era-EngA-EngB-Septin-like GTPase superfamily. EngA (Der) GTPase family. In terms of assembly, associates with the 50S ribosomal subunit.

Its function is as follows. GTPase that plays an essential role in the late steps of ribosome biogenesis. This chain is GTPase Der, found in Brucella anthropi (strain ATCC 49188 / DSM 6882 / CCUG 24695 / JCM 21032 / LMG 3331 / NBRC 15819 / NCTC 12168 / Alc 37) (Ochrobactrum anthropi).